The primary structure comprises 343 residues: Protein RecA (343 aa).

Residue 65–72 (GPESSGKT) participates in ATP binding.

This sequence belongs to the RecA family.

Its subcellular location is the cytoplasm. In terms of biological role, can catalyze the hydrolysis of ATP in the presence of single-stranded DNA, the ATP-dependent uptake of single-stranded DNA by duplex DNA, and the ATP-dependent hybridization of homologous single-stranded DNAs. It interacts with LexA causing its activation and leading to its autocatalytic cleavage. The chain is Protein RecA from Campylobacter jejuni subsp. doylei (strain ATCC BAA-1458 / RM4099 / 269.97).